Consider the following 217-residue polypeptide: Adenosylcobinamide-GDP ribazoletransferase (217 aa).

Transmembrane regions (helical) follow at residues 6 to 26 (ALLS…FKCA), 39 to 61 (GPAA…LLLM), 95 to 115 (GTGG…STAS), 116 to 136 (PLQL…VAAF), and 162 to 182 (ALAV…AVAL).

Belongs to the CobS family. It depends on Mg(2+) as a cofactor.

Its subcellular location is the cell membrane. The enzyme catalyses alpha-ribazole + adenosylcob(III)inamide-GDP = adenosylcob(III)alamin + GMP + H(+). It carries out the reaction alpha-ribazole 5'-phosphate + adenosylcob(III)inamide-GDP = adenosylcob(III)alamin 5'-phosphate + GMP + H(+). It functions in the pathway cofactor biosynthesis; adenosylcobalamin biosynthesis; adenosylcobalamin from cob(II)yrinate a,c-diamide: step 7/7. In terms of biological role, joins adenosylcobinamide-GDP and alpha-ribazole to generate adenosylcobalamin (Ado-cobalamin). Also synthesizes adenosylcobalamin 5'-phosphate from adenosylcobinamide-GDP and alpha-ribazole 5'-phosphate. This chain is Adenosylcobinamide-GDP ribazoletransferase, found in Pyrobaculum calidifontis (strain DSM 21063 / JCM 11548 / VA1).